Reading from the N-terminus, the 132-residue chain is Small ribosomal subunit protein uS8 (132 aa).

Belongs to the universal ribosomal protein uS8 family. As to quaternary structure, part of the 30S ribosomal subunit. Contacts proteins S5 and S12.

Functionally, one of the primary rRNA binding proteins, it binds directly to 16S rRNA central domain where it helps coordinate assembly of the platform of the 30S subunit. The sequence is that of Small ribosomal subunit protein uS8 from Lactobacillus acidophilus (strain ATCC 700396 / NCK56 / N2 / NCFM).